The chain runs to 365 residues: Histidinol-phosphate aminotransferase (365 aa).

Position 223 is an N6-(pyridoxal phosphate)lysine (Lys-223).

Belongs to the class-II pyridoxal-phosphate-dependent aminotransferase family. Histidinol-phosphate aminotransferase subfamily. Homodimer. Requires pyridoxal 5'-phosphate as cofactor.

The enzyme catalyses L-histidinol phosphate + 2-oxoglutarate = 3-(imidazol-4-yl)-2-oxopropyl phosphate + L-glutamate. It functions in the pathway amino-acid biosynthesis; L-histidine biosynthesis; L-histidine from 5-phospho-alpha-D-ribose 1-diphosphate: step 7/9. This is Histidinol-phosphate aminotransferase from Bacillus pumilus (strain SAFR-032).